We begin with the raw amino-acid sequence, 227 residues long: Ribose-5-phosphate isomerase A (227 aa).

Substrate is bound by residues 28 to 31 (TGST), 81 to 84 (DGAD), and 94 to 97 (KGGG). Glutamate 103 serves as the catalytic Proton acceptor. Lysine 121 contacts substrate.

It belongs to the ribose 5-phosphate isomerase family. In terms of assembly, homodimer.

The enzyme catalyses aldehydo-D-ribose 5-phosphate = D-ribulose 5-phosphate. Its pathway is carbohydrate degradation; pentose phosphate pathway; D-ribose 5-phosphate from D-ribulose 5-phosphate (non-oxidative stage): step 1/1. Catalyzes the reversible conversion of ribose-5-phosphate to ribulose 5-phosphate. The protein is Ribose-5-phosphate isomerase A of Caulobacter vibrioides (strain ATCC 19089 / CIP 103742 / CB 15) (Caulobacter crescentus).